The following is a 241-amino-acid chain: tRNA (guanine-N(1)-)-methyltransferase (241 aa).

S-adenosyl-L-methionine contacts are provided by residues glycine 123 and isoleucine 143–leucine 148.

This sequence belongs to the RNA methyltransferase TrmD family. As to quaternary structure, homodimer.

It localises to the cytoplasm. The catalysed reaction is guanosine(37) in tRNA + S-adenosyl-L-methionine = N(1)-methylguanosine(37) in tRNA + S-adenosyl-L-homocysteine + H(+). Its function is as follows. Specifically methylates guanosine-37 in various tRNAs. The chain is tRNA (guanine-N(1)-)-methyltransferase from Roseobacter denitrificans (strain ATCC 33942 / OCh 114) (Erythrobacter sp. (strain OCh 114)).